A 1259-amino-acid polypeptide reads, in one-letter code: Clustered mitochondria protein homolog (1259 aa).

The span at 1-27 shows a compositional bias: polar residues; that stretch reads MSQTNGNMEHSKETPQSQEVEQLTNGN. The segment at 1–38 is disordered; sequence MSQTNGNMEHSKETPQSQEVEQLTNGNHPEEQQEEEEN. In terms of domain architecture, Clu spans 324–568; the sequence is DITRSQESYL…RVTPLDVMWQ (245 aa). Basic and acidic residues-rich tracts occupy residues 612–628 and 634–647; these read AEAE…SKEQ and TEEK…QERV. Disordered stretches follow at residues 612-647 and 881-908; these read AEAE…QERV and VVNG…PSRA. TPR repeat units follow at residues 982 to 1015, 1024 to 1057, and 1066 to 1099; these read AKLY…TERT, ILAY…WKII, and ITTM…CESL. Disordered stretches follow at residues 1192-1215 and 1229-1259; these read TKVQ…ANAS and EGGD…KSSA.

This sequence belongs to the CLU family. As to quaternary structure, may associate with the eukaryotic translation initiation factor 3 (eIF-3) complex.

It is found in the cytoplasm. Functionally, mRNA-binding protein involved in proper cytoplasmic distribution of mitochondria. The protein is Clustered mitochondria protein homolog of Aspergillus clavatus (strain ATCC 1007 / CBS 513.65 / DSM 816 / NCTC 3887 / NRRL 1 / QM 1276 / 107).